A 471-amino-acid chain; its full sequence is Abscission/NoCut checkpoint regulator (471 aa).

Residues 39 to 64 (GGAGQGREGRSWGEGPRGPGLGRRDL) form a disordered region. An FYVE-type zinc finger spans residues 74-133 (ATMESRCYGCAVKFTLFKKEYGCKNCGRAFCSGCLSFSAAVPRTGNTQQKVCKQCHEVLT). Zn(2+) contacts are provided by Cys-80, Cys-83, Cys-96, Cys-99, Cys-104, Cys-107, Cys-125, and Cys-128. A Phosphoserine modification is found at Ser-144. The MIM1-A signature appears at 174–187 (DQMIAERLARLRQE). Lys-207 is covalently cross-linked (Glycyl lysine isopeptide (Lys-Gly) (interchain with G-Cter in SUMO2)). Thr-243 carries the phosphothreonine modification. A disordered region spans residues 271–299 (KGGGPAASLQNDLNQGGPGSTNSKRQANW). Polar residues predominate over residues 278–299 (SLQNDLNQGGPGSTNSKRQANW). Gly-286 and Ser-293 each carry phosphoserine. The stretch at 311 to 375 (EAALELREEN…RVLQQLTEEA (65 aa)) forms a coiled coil. An MIM1-B motif is present at residues 326–339 (ILALAKRLAMLRGQ). Ser-354 is modified (phosphoserine). Residues 386–412 (PAEQASRPWTQPRGAEPEAQDVDPRPE) are disordered. At Ser-463 the chain carries Phosphoserine.

In terms of assembly, interacts (via MIM1-B) with VPS4A; interaction takes place at the midbody ring following cytokinesis checkpoint activation. Phosphorylated in vitro at Ser-22 by AURKB; however, phosphorylation at this site could not be confirmed in vivo. In terms of tissue distribution, detected in brain, heart, skeletal muscle and kidney. Expressed in the liver (at protein level).

It localises to the cytoplasm. The protein localises to the cytoskeleton. Its subcellular location is the microtubule organizing center. It is found in the centrosome. The protein resides in the cleavage furrow. It localises to the midbody. The protein localises to the midbody ring. In terms of biological role, key regulator of abscission step in cytokinesis: part of the cytokinesis checkpoint, a process required to delay abscission to prevent both premature resolution of intercellular chromosome bridges and accumulation of DNA damage. Together with CHMP4C, required to retain abscission-competent VPS4 (VPS4A and/or VPS4B) at the midbody ring until abscission checkpoint signaling is terminated at late cytokinesis. Deactivation of AURKB results in dephosphorylation of CHMP4C followed by its dissociation from ZFYVE19/ANCHR and VPS4 and subsequent abscission. This is Abscission/NoCut checkpoint regulator (ZFYVE19) from Homo sapiens (Human).